The primary structure comprises 262 residues: 4-hydroxy-2-oxo-heptane-1,7-dioate aldolase (262 aa).

The active-site Proton acceptor is the His-45. Gln-147 lines the substrate pocket. Glu-149 provides a ligand contact to a divalent metal cation. Substrate-binding residues include Ala-174 and Asp-175. An a divalent metal cation-binding site is contributed by Asp-175.

Belongs to the HpcH/HpaI aldolase family. Homohexamer; trimer of dimers. A divalent metal cation is required as a cofactor.

The enzyme catalyses 4-hydroxy-2-oxoheptanedioate = succinate semialdehyde + pyruvate. It functions in the pathway aromatic compound metabolism; 4-hydroxyphenylacetate degradation; pyruvate and succinate semialdehyde from 4-hydroxyphenylacetate: step 7/7. Its function is as follows. Catalyzes the reversible retro-aldol cleavage of 4-hydroxy-2-ketoheptane-1,7-dioate (HKHD) to pyruvate and succinic semialdehyde. This Shigella boydii serotype 18 (strain CDC 3083-94 / BS512) protein is 4-hydroxy-2-oxo-heptane-1,7-dioate aldolase.